Reading from the N-terminus, the 328-residue chain is Bcl-2/adenovirus E1B 19 kDa-interacting protein 2-like protein (328 aa).

The span at methionine 1–proline 22 shows a compositional bias: basic and acidic residues. Residues methionine 1 to aspartate 116 form a disordered region. Residues arginine 36–serine 45 are compositionally biased toward polar residues. The span at alanine 76–serine 89 shows a compositional bias: low complexity. Residues leucine 92–glutamine 105 are compositionally biased toward acidic residues. Over residues aspartate 107–aspartate 116 the composition is skewed to basic and acidic residues. The CRAL-TRIO domain maps to aspartate 162–histidine 323.

As to quaternary structure, homodimer. Interacts with BCL2, ARHGAP1, MIF and GFER.

In terms of biological role, may be a bridge molecule between BCL2 and ARHGAP1/CDC42 in promoting cell death. This chain is Bcl-2/adenovirus E1B 19 kDa-interacting protein 2-like protein (Bnipl), found in Mus musculus (Mouse).